The following is a 149-amino-acid chain: SsrA-binding protein (149 aa).

The protein belongs to the SmpB family.

It localises to the cytoplasm. Required for rescue of stalled ribosomes mediated by trans-translation. Binds to transfer-messenger RNA (tmRNA), required for stable association of tmRNA with ribosomes. tmRNA and SmpB together mimic tRNA shape, replacing the anticodon stem-loop with SmpB. tmRNA is encoded by the ssrA gene; the 2 termini fold to resemble tRNA(Ala) and it encodes a 'tag peptide', a short internal open reading frame. During trans-translation Ala-aminoacylated tmRNA acts like a tRNA, entering the A-site of stalled ribosomes, displacing the stalled mRNA. The ribosome then switches to translate the ORF on the tmRNA; the nascent peptide is terminated with the 'tag peptide' encoded by the tmRNA and targeted for degradation. The ribosome is freed to recommence translation, which seems to be the essential function of trans-translation. This chain is SsrA-binding protein, found in Wolbachia pipientis wMel.